The sequence spans 362 residues: Protein OCA4 (362 aa).

In terms of biological role, required for replication of Brome mosaic virus (BMV). In Saccharomyces cerevisiae (strain ATCC 204508 / S288c) (Baker's yeast), this protein is Protein OCA4 (OCA4).